The following is a 105-amino-acid chain: Large ribosomal subunit protein uL24 (105 aa).

Belongs to the universal ribosomal protein uL24 family. Part of the 50S ribosomal subunit.

One of two assembly initiator proteins, it binds directly to the 5'-end of the 23S rRNA, where it nucleates assembly of the 50S subunit. In terms of biological role, one of the proteins that surrounds the polypeptide exit tunnel on the outside of the subunit. The sequence is that of Large ribosomal subunit protein uL24 from Vibrio parahaemolyticus serotype O3:K6 (strain RIMD 2210633).